The primary structure comprises 327 residues: Tyrosine--tRNA ligase (327 aa).

Tyrosine 33 is a binding site for L-tyrosine. Positions 38–46 (PSGVLHLGH) match the 'HIGH' region motif. The L-tyrosine site is built by tyrosine 154, glutamine 158, aspartate 161, and glutamine 176. The 'KMSKS' region motif lies at 212–216 (KMSSS). Serine 215 is an ATP binding site.

It belongs to the class-I aminoacyl-tRNA synthetase family. TyrS type 3 subfamily. As to quaternary structure, homodimer.

It localises to the cytoplasm. It catalyses the reaction tRNA(Tyr) + L-tyrosine + ATP = L-tyrosyl-tRNA(Tyr) + AMP + diphosphate + H(+). Functionally, catalyzes the attachment of tyrosine to tRNA(Tyr) in a two-step reaction: tyrosine is first activated by ATP to form Tyr-AMP and then transferred to the acceptor end of tRNA(Tyr). The sequence is that of Tyrosine--tRNA ligase from Halobacterium salinarum (strain ATCC 29341 / DSM 671 / R1).